The following is a 416-amino-acid chain: Phosphoglycerate kinase (416 aa).

The (2R)-3-phosphoglycerate site is built by Val23, Asp24, Phe25, Asn26, Gln38, Arg39, Ser62, His63, Gly65, Arg66, Leu121, Arg122, His168, and Arg169. Position 212 (Gly212) interacts with ADP. Gly212 is a binding site for CDP. AMP-binding residues include Ala213 and Lys214. Ala213 contributes to the ATP binding site. Residue Ala213 coordinates Mg(2+). Mg(2+) is bound by residues Ala216 and Asp217. Residue Asp217 participates in CDP binding. AMP is bound at residue Lys218. Lys218 is a binding site for ATP. Residue Gly236 participates in ADP binding. Residue Gly236 coordinates CDP. Positions 237 and 311 each coordinate AMP. Residues Gly237 and Gly311 each contribute to the ATP site. Residues Gly336 and Phe341 each contribute to the CDP site. Position 341 (Phe341) interacts with ADP. An AMP-binding site is contributed by Glu342. ATP-binding residues include Glu342, Asp373, and Thr374. Residue Asp373 participates in Mg(2+) binding.

This sequence belongs to the phosphoglycerate kinase family. As to quaternary structure, monomer. It depends on Mg(2+) as a cofactor.

Its subcellular location is the cytoplasm. It is found in the mitochondrion. It catalyses the reaction (2R)-3-phosphoglycerate + ATP = (2R)-3-phospho-glyceroyl phosphate + ADP. It functions in the pathway carbohydrate degradation; glycolysis; pyruvate from D-glyceraldehyde 3-phosphate: step 2/5. In terms of biological role, catalyzes one of the two ATP producing reactions in the glycolytic pathway via the reversible conversion of 1,3-diphosphoglycerate to 3-phosphoglycerate. Both L- and D- forms of purine and pyrimidine nucleotides can be used as substrates, but the activity is much lower on pyrimidines. Negatively regulates the biosynthesis of acetyl-CoA from pyruvate in the mitochondrion. This is Phosphoglycerate kinase (PGK) from Kluyveromyces lactis (strain ATCC 8585 / CBS 2359 / DSM 70799 / NBRC 1267 / NRRL Y-1140 / WM37) (Yeast).